A 353-amino-acid chain; its full sequence is Photosystem II D2 protein (353 aa).

An N-acetylthreonine modification is found at T2. T2 is subject to Phosphothreonine. Residues 41-61 form a helical membrane-spanning segment; the sequence is CAYFALGGWFTGTTFVTSWYT. H118 provides a ligand contact to chlorophyll a. The chain crosses the membrane as a helical span at residues 125 to 141; it reads GFMLRQFELARSVQLRP. Residues Q130 and N143 each coordinate pheophytin a. A helical transmembrane segment spans residues 153–166; that stretch reads VFVSVFLIYPLGQS. H198 contributes to the chlorophyll a binding site. The chain crosses the membrane as a helical span at residues 208–228; that stretch reads AALLCAIHGATVENTLFEDGD. A plastoquinone contacts are provided by H215 and F262. H215 is a binding site for Fe cation. H269 provides a ligand contact to Fe cation. The chain crosses the membrane as a helical span at residues 279-295; that stretch reads GLWMSALGVVGLALNLR.

The protein belongs to the reaction center PufL/M/PsbA/D family. In terms of assembly, PSII is composed of 1 copy each of membrane proteins PsbA, PsbB, PsbC, PsbD, PsbE, PsbF, PsbH, PsbI, PsbJ, PsbK, PsbL, PsbM, PsbT, PsbX, PsbY, PsbZ, Psb30/Ycf12, at least 3 peripheral proteins of the oxygen-evolving complex and a large number of cofactors. It forms dimeric complexes. The D1/D2 heterodimer binds P680, chlorophylls that are the primary electron donor of PSII, and subsequent electron acceptors. It shares a non-heme iron and each subunit binds pheophytin, quinone, additional chlorophylls, carotenoids and lipids. There is also a Cl(-1) ion associated with D1 and D2, which is required for oxygen evolution. The PSII complex binds additional chlorophylls, carotenoids and specific lipids. serves as cofactor.

The protein localises to the plastid. Its subcellular location is the chloroplast thylakoid membrane. It catalyses the reaction 2 a plastoquinone + 4 hnu + 2 H2O = 2 a plastoquinol + O2. Photosystem II (PSII) is a light-driven water:plastoquinone oxidoreductase that uses light energy to abstract electrons from H(2)O, generating O(2) and a proton gradient subsequently used for ATP formation. It consists of a core antenna complex that captures photons, and an electron transfer chain that converts photonic excitation into a charge separation. The D1/D2 (PsbA/PsbD) reaction center heterodimer binds P680, the primary electron donor of PSII as well as several subsequent electron acceptors. D2 is needed for assembly of a stable PSII complex. The protein is Photosystem II D2 protein of Nandina domestica (Heavenly bamboo).